Consider the following 458-residue polypeptide: Exodeoxyribonuclease 7 large subunit (458 aa).

The protein belongs to the XseA family. In terms of assembly, heterooligomer composed of large and small subunits.

It is found in the cytoplasm. The catalysed reaction is Exonucleolytic cleavage in either 5'- to 3'- or 3'- to 5'-direction to yield nucleoside 5'-phosphates.. Functionally, bidirectionally degrades single-stranded DNA into large acid-insoluble oligonucleotides, which are then degraded further into small acid-soluble oligonucleotides. The sequence is that of Exodeoxyribonuclease 7 large subunit from Serratia proteamaculans (strain 568).